Reading from the N-terminus, the 658-residue chain is ATP-dependent DNA helicase Rep (658 aa).

Residues 1-280 (MSLNFNQKNA…IKMEQNYRSY (280 aa)) enclose the UvrD-like helicase ATP-binding domain. ATP is bound by residues 22–29 (AGAGSGKT) and arginine 278. Positions 281–564 (GRILKAANKL…QLMTLHSSKG (284 aa)) constitute a UvrD-like helicase C-terminal domain.

Belongs to the helicase family. UvrD subfamily. As to quaternary structure, homodimer.

The catalysed reaction is Couples ATP hydrolysis with the unwinding of duplex DNA by translocating in the 3'-5' direction.. It catalyses the reaction ATP + H2O = ADP + phosphate + H(+). Rep helicase is a single-stranded DNA-dependent ATPase involved in DNA replication; it can initiate unwinding at a nick in the DNA. It binds to the single-stranded DNA and acts in a progressive fashion along the DNA in the 3' to 5' direction. In Buchnera aphidicola subsp. Schizaphis graminum (strain Sg), this protein is ATP-dependent DNA helicase Rep.